A 284-amino-acid chain; its full sequence is D-tagatose-1,6-bisphosphate aldolase subunit GatY (284 aa).

Asp82 (proton donor) is an active-site residue. Zn(2+) contacts are provided by His83 and His180. Residue Gly181 coordinates dihydroxyacetone phosphate. A Zn(2+)-binding site is contributed by His208. Residues 209 to 211 (GAS) and 230 to 233 (NVAT) each bind dihydroxyacetone phosphate.

The protein belongs to the class II fructose-bisphosphate aldolase family. TagBP aldolase GatY subfamily. As to quaternary structure, forms a complex with GatZ. It depends on Zn(2+) as a cofactor.

The catalysed reaction is D-tagatofuranose 1,6-bisphosphate = D-glyceraldehyde 3-phosphate + dihydroxyacetone phosphate. Its pathway is carbohydrate metabolism; D-tagatose 6-phosphate degradation; D-glyceraldehyde 3-phosphate and glycerone phosphate from D-tagatose 6-phosphate: step 2/2. Its function is as follows. Catalytic subunit of the tagatose-1,6-bisphosphate aldolase GatYZ, which catalyzes the reversible aldol condensation of dihydroxyacetone phosphate (DHAP or glycerone-phosphate) with glyceraldehyde 3-phosphate (G3P) to produce tagatose 1,6-bisphosphate (TBP). Requires GatZ subunit for full activity and stability. Is involved in the catabolism of galactitol. The polypeptide is D-tagatose-1,6-bisphosphate aldolase subunit GatY (Shigella boydii serotype 4 (strain Sb227)).